Reading from the N-terminus, the 125-residue chain is Large ribosomal subunit protein bL12 (125 aa).

It belongs to the bacterial ribosomal protein bL12 family. In terms of assembly, homodimer. Part of the ribosomal stalk of the 50S ribosomal subunit. Forms a multimeric L10(L12)X complex, where L10 forms an elongated spine to which 2 to 4 L12 dimers bind in a sequential fashion. Binds GTP-bound translation factors.

Its function is as follows. Forms part of the ribosomal stalk which helps the ribosome interact with GTP-bound translation factors. Is thus essential for accurate translation. The sequence is that of Large ribosomal subunit protein bL12 from Porphyromonas gingivalis (strain ATCC 33277 / DSM 20709 / CIP 103683 / JCM 12257 / NCTC 11834 / 2561).